A 217-amino-acid polypeptide reads, in one-letter code: Large ribosomal subunit protein uL1 (217 aa).

The protein belongs to the universal ribosomal protein uL1 family. In terms of assembly, part of the 50S ribosomal subunit.

In terms of biological role, binds directly to 23S rRNA. Probably involved in E site tRNA release. Functionally, protein L1 is also a translational repressor protein, it controls the translation of its operon by binding to its mRNA. The sequence is that of Large ribosomal subunit protein uL1 from Hyperthermus butylicus (strain DSM 5456 / JCM 9403 / PLM1-5).